The primary structure comprises 252 residues: Intraflagellar transport associated protein 2 (252 aa).

Residues 35–42 (GPPKAGKT) and 118–125 (WDVSGDKK) contribute to the GTP site.

This sequence belongs to the small GTPase superfamily. Rab family. As to quaternary structure, component of the IFT complex B composed of at least che-2, che-13, dyf-1, dyf-3, dyf-6, dyf-11, dyf-13, ift-20, ift-74, ift-81, ifta-2, osm-1, osm-5 and osm-6. Ciliated sensory neurons.

It is found in the cytoplasm. The protein localises to the cytoskeleton. Its subcellular location is the cilium axoneme. Component of the intraflagellar transport (IFT) complex B required for transport of proteins in the motile cilium. May be required for ciliary entrance and transport of specific ciliary cargo proteins such as che-3 which are related to motility. Regulates specific signaling activities in the cilia, such as the daf-2/insulin receptor-like transduction pathway. The protein is Intraflagellar transport associated protein 2 of Caenorhabditis elegans.